The primary structure comprises 254 residues: Stem 28 kDa glycoprotein (254 aa).

Residues 1–21 form the signal peptide; that stretch reads MKMKVLVFFVATILVAWQCHA. A propeptide spanning residues 22–34 is cleaved from the precursor; that stretch reads YDMFPLRMNTGYG. An N-linked (GlcNAc...) asparagine glycan is attached at Asn-129.

It belongs to the APS1/VSP family. In terms of tissue distribution, accumulates in the stems of developing soybean seedlings.

Its function is as follows. May function as somatic storage protein during early seedling development. The protein is Stem 28 kDa glycoprotein (VSPA) of Glycine max (Soybean).